A 288-amino-acid chain; its full sequence is Eukaryotic translation initiation factor 3 subunit G (288 aa).

Positions 1–33 are disordered; sequence MSRVANNRDWADDEDLEDSNELPQSTTTTNKDG. Positions 11 to 20 are enriched in acidic residues; that stretch reads ADDEDLEDSN. A compositionally biased stretch (polar residues) spans 21-33; the sequence is ELPQSTTTTNKDG. In terms of domain architecture, RRM spans 208–286; that stretch reads ATLRVTNVSE…LILRVEFAKK (79 aa).

Belongs to the eIF-3 subunit G family. As to quaternary structure, component of the eukaryotic translation initiation factor 3 (eIF-3) complex.

The protein resides in the cytoplasm. RNA-binding component of the eukaryotic translation initiation factor 3 (eIF-3) complex, which is involved in protein synthesis of a specialized repertoire of mRNAs and, together with other initiation factors, stimulates binding of mRNA and methionyl-tRNAi to the 40S ribosome. The eIF-3 complex specifically targets and initiates translation of a subset of mRNAs involved in cell proliferation. This subunit can bind 18S rRNA. The chain is Eukaryotic translation initiation factor 3 subunit G (tif35) from Sclerotinia sclerotiorum (strain ATCC 18683 / 1980 / Ss-1) (White mold).